Here is a 315-residue protein sequence, read N- to C-terminus: MQNRLTIKDIARLSGVGKSTVSRVLNNESGVSQLTRERVEAVMNQHGFSPSRSARAMRGQSDKVVAIIVTRLDSLSENLAVQTMLPAFYEQGYDPIMMESQFSPQLVAEHLGVLKRRNIDGVVLFGFTGITEEMLAHWQSSLVLLARDAKGFASVCYDDEGAIKILMQRLYDQGHRNISYLGVPHSDVTTGKRRHEAYLAFCKAHKLHPVAALPGLAMKQGYENVAKVITPETTALLCATDTLALGASKYLQEQRIDTLQLASVGNTPLMKFLHPEIVTVDPGYAEAGRQAACQLIAQVTGRSEPQQIIIPATLS.

The region spanning Leu-5–Gly-59 is the HTH lacI-type domain. Residues Ile-7–Asn-26 constitute a DNA-binding region (H-T-H motif). Residues Arg-71–Glu-77, Gly-126, Arg-147, Asp-187–Thr-190, Arg-194, Thr-242, and Tyr-284 contribute to the alpha,alpha-trehalose 6-phosphate site.

In terms of assembly, homodimer.

Repressor of the treBC operon. It is able to bind trehalose-6-phosphate and trehalose. The sequence is that of HTH-type transcriptional regulator TreR (treR) from Escherichia coli (strain K12).